An 842-amino-acid polypeptide reads, in one-letter code: Alanine--tRNA ligase (842 aa).

4 residues coordinate Zn(2+): His-549, His-553, Cys-650, and His-654.

It belongs to the class-II aminoacyl-tRNA synthetase family. The cofactor is Zn(2+).

Its subcellular location is the cytoplasm. It catalyses the reaction tRNA(Ala) + L-alanine + ATP = L-alanyl-tRNA(Ala) + AMP + diphosphate. Its function is as follows. Catalyzes the attachment of alanine to tRNA(Ala) in a two-step reaction: alanine is first activated by ATP to form Ala-AMP and then transferred to the acceptor end of tRNA(Ala). Also edits incorrectly charged Ser-tRNA(Ala) and Gly-tRNA(Ala) via its editing domain. This Campylobacter jejuni (strain RM1221) protein is Alanine--tRNA ligase.